The primary structure comprises 154 residues: uncharacterized protein (154 aa).

Belongs to the MG032/MG096/MG288 family.

This is an uncharacterized protein from Mycoplasma pneumoniae (strain ATCC 29342 / M129 / Subtype 1) (Mycoplasmoides pneumoniae).